Consider the following 315-residue polypeptide: ATP synthase gamma chain (315 aa).

It belongs to the ATPase gamma chain family. F-type ATPases have 2 components, CF(1) - the catalytic core - and CF(0) - the membrane proton channel. CF(1) has five subunits: alpha(3), beta(3), gamma(1), delta(1), epsilon(1). CF(0) has three main subunits: a, b and c.

It is found in the cellular thylakoid membrane. Produces ATP from ADP in the presence of a proton gradient across the membrane. The gamma chain is believed to be important in regulating ATPase activity and the flow of protons through the CF(0) complex. The polypeptide is ATP synthase gamma chain (Synechococcus sp. (strain PCC 6716)).